A 78-amino-acid chain; its full sequence is Beta-defensin 105A (78 aa).

An N-terminal signal peptide occupies residues 1–27 (MALIRKTFYFLFAVFFVLVQLPSECQA). 3 cysteine pairs are disulfide-bonded: Cys43/Cys74, Cys53/Cys67, and Cys57/Cys73.

The protein belongs to the beta-defensin family.

The protein localises to the secreted. Functionally, has antimicrobial activity. The polypeptide is Beta-defensin 105A (DEFB105A) (Pongo pygmaeus (Bornean orangutan)).